Consider the following 811-residue polypeptide: Bifunctional enzyme MurC/Ddl (811 aa).

A UDP-N-acetylmuramate--alanine ligase region spans residues 1-450; the sequence is MNRKNHYHFI…GNALKDFEPK (450 aa). ATP is bound by residues 111-117 and 607-662; these read GSHGKTT and LETF…SREI. The D-alanine--D-alanine ligase stretch occupies residues 451–811; that stretch reads KLSVGVVCGG…NKQCLLTAKS (361 aa). The region spanning 574–785 is the ATP-grasp domain; that stretch reads KRLAASVGVP…FEQIVHQLII (212 aa). 3 residues coordinate Mg(2+): Asp-739, Glu-752, and Asn-754.

In the N-terminal section; belongs to the MurCDEF family. This sequence in the C-terminal section; belongs to the D-alanine--D-alanine ligase family. Mg(2+) is required as a cofactor. It depends on Mn(2+) as a cofactor.

The protein localises to the cytoplasm. It catalyses the reaction UDP-N-acetyl-alpha-D-muramate + L-alanine + ATP = UDP-N-acetyl-alpha-D-muramoyl-L-alanine + ADP + phosphate + H(+). The enzyme catalyses 2 D-alanine + ATP = D-alanyl-D-alanine + ADP + phosphate + H(+). It functions in the pathway cell wall biogenesis; peptidoglycan biosynthesis. The protein is Bifunctional enzyme MurC/Ddl (murC/ddlA) of Chlamydia caviae (strain ATCC VR-813 / DSM 19441 / 03DC25 / GPIC) (Chlamydophila caviae).